A 439-amino-acid chain; its full sequence is CBL-interacting serine/threonine-protein kinase 20 (439 aa).

Residues Tyr12–Phe266 form the Protein kinase domain. Residues Leu18–Val26 and Lys41 each bind ATP. Asp134 serves as the catalytic Proton acceptor. The interval Asp152–Glu181 is activation loop. The residue at position 156 (Ser156) is a Phosphoserine. A Phosphothreonine modification is found at Thr170. Positions Val297–Glu322 constitute an NAF domain. Residues Arg326–Leu356 form a PPI region.

This sequence belongs to the protein kinase superfamily. CAMK Ser/Thr protein kinase family. SNF1 subfamily. Requires Mn(2+) as cofactor. Post-translationally, autophosphorylated. In terms of tissue distribution, confined to mature leaves.

The enzyme catalyses L-seryl-[protein] + ATP = O-phospho-L-seryl-[protein] + ADP + H(+). The catalysed reaction is L-threonyl-[protein] + ATP = O-phospho-L-threonyl-[protein] + ADP + H(+). Its function is as follows. CIPK serine-threonine protein kinases interact with CBL proteins. Binding of a CBL protein to the regulatory NAF domain of CIPK protein lead to the activation of the kinase in a calcium-dependent manner. Required for the abscisic acid-mediated (ABA) signaling pathway involved in seed germination and growth elongation inhibition. The protein is CBL-interacting serine/threonine-protein kinase 20 (CIPK20) of Arabidopsis thaliana (Mouse-ear cress).